The primary structure comprises 217 residues: Nucleoside diphosphate kinase homolog 5 (217 aa).

Residues Glu-18 to Ser-151 are NDK.

It belongs to the NDK family.

It localises to the cell projection. The protein resides in the cilium. In terms of biological role, functions as part of axonemal radial spoke complexes that play an important part in the motility of sperm and cilia. Does not seem to have nucleoside diphosphate kinase (NDPK) activity. Exhibits a 3'-5' exonuclease activity with a preference for single-stranded DNA, suggesting roles in DNA proofreading and repair. The protein is Nucleoside diphosphate kinase homolog 5 (nme5) of Danio rerio (Zebrafish).